We begin with the raw amino-acid sequence, 466 residues long: ATP synthase subunit beta (466 aa).

152–159 (GGAGVGKT) is an ATP binding site.

Belongs to the ATPase alpha/beta chains family. F-type ATPases have 2 components, CF(1) - the catalytic core - and CF(0) - the membrane proton channel. CF(1) has five subunits: alpha(3), beta(3), gamma(1), delta(1), epsilon(1). CF(0) has three main subunits: a(1), b(2) and c(9-12). The alpha and beta chains form an alternating ring which encloses part of the gamma chain. CF(1) is attached to CF(0) by a central stalk formed by the gamma and epsilon chains, while a peripheral stalk is formed by the delta and b chains.

The protein localises to the cell inner membrane. It catalyses the reaction ATP + H2O + 4 H(+)(in) = ADP + phosphate + 5 H(+)(out). Its function is as follows. Produces ATP from ADP in the presence of a proton gradient across the membrane. The catalytic sites are hosted primarily by the beta subunits. This chain is ATP synthase subunit beta, found in Helicobacter pylori (strain HPAG1).